The chain runs to 522 residues: MGKKGKKEKKGRGAEKTAAKMEKKVSKRSRKEEEDLEALIAHFQTLDAKRTQTVEAPCPPPSPRLNASLSVHPEKDELILFGGEYFNGQKTFLYNELYVYNIRKDTWTKVDIPSPPPRRCAHQAVVVPQGGGQLWVFGGEFASPNGEQFYHYKDLWVLHLATKTWEQVKSTGSPSGRSGHRMVAWKRQLILFGGFHESTRDYIYYNDVYTFNLDTFTWSKLSPSGTGPTPRSGCQMSVTPQGGIIIYGGYSKQRVKKDVDRGTRHSDMFLLKPEDGREDKWVWTRMNPSGVKPTPRSGFSAAMALNHQTLFFGGVCDEEEEESLAGEFFNDLYFYDATRNRWFEGQLKGPKSEKKKRRRGRKEESEGGSKLACGGAGTQGPVQVVKEVVAEDGTVVTIKQVLAAPGSAGQPRSEDEDSPEEAGSSAPGPCPRSNAMLAVKHGVLYVYGGMFEAGDRQVTLSDLHCLDLHRMEAWKALVEMDPETQEWLEETDSEEDSEEVEGAEGGDEDEDEDSREESGAED.

Residues 1–10 (MGKKGKKEKK) are compositionally biased toward basic residues. Residues 1–33 (MGKKGKKEKKGRGAEKTAAKMEKKVSKRSRKEE) are disordered. The segment covering 11 to 24 (GRGAEKTAAKMEKK) has biased composition (basic and acidic residues). Kelch repeat units lie at residues 77 to 129 (ELIL…VVPQ), 133 to 187 (QLWV…AWKR), 188 to 241 (QLIL…VTPQ), 243 to 289 (GIII…MNPS), and 308 to 361 (QTLF…RRGR). 3 disordered regions span residues 346-378 (QLKG…GAGT), 402-432 (LAAP…PCPR), and 481-522 (DPET…GAED). Residues Ser413 and Ser418 each carry the phosphoserine modification. A Kelch 6 repeat occupies 443–494 (VLYVYGGMFEAGDRQVTLSDLHCLDLHRMEAWKALVEMDPETQEWLEETDSE).

This chain is Kelch domain-containing protein 4 (KLHDC4), found in Pongo abelii (Sumatran orangutan).